We begin with the raw amino-acid sequence, 133 residues long: Transcriptional regulator MraZ (133 aa).

SpoVT-AbrB domains lie at 5-47 (TYEH…SKDD) and 76-119 (TVEI…SKNK).

This sequence belongs to the MraZ family. In terms of assembly, forms oligomers.

It localises to the cytoplasm. Its subcellular location is the nucleoid. This Mycoplasma mycoides subsp. mycoides SC (strain CCUG 32753 / NCTC 10114 / PG1) protein is Transcriptional regulator MraZ.